We begin with the raw amino-acid sequence, 297 residues long: Phosphatidylinositol N-acetylglucosaminyltransferase subunit C (297 aa).

Helical transmembrane passes span valine 67–glycine 87, threonine 88–glycine 108, alanine 153–valine 173, and alanine 239–isoleucine 259.

It belongs to the PIGC family. In terms of assembly, component of the glycosylphosphatidylinositol-N-acetylglucosaminyltransferase (GPI-GnT) complex composed at least by PIGA, PIGC, PIGH, PIGP, PIGQ, PIGY and DPM2. Interacts with PIGQ. Interacts with the heterodimer PIGA:PIGH.

The protein localises to the endoplasmic reticulum membrane. It participates in glycolipid biosynthesis; glycosylphosphatidylinositol-anchor biosynthesis. Part of the glycosylphosphatidylinositol-N-acetylglucosaminyltransferase (GPI-GnT) complex that catalyzes the transfer of N-acetylglucosamine from UDP-N-acetylglucosamine to phosphatidylinositol and participates in the first step of GPI biosynthesis. The polypeptide is Phosphatidylinositol N-acetylglucosaminyltransferase subunit C (Bos taurus (Bovine)).